A 348-amino-acid chain; its full sequence is Protein RecA (348 aa).

64–71 (GPESSGKT) is a binding site for ATP. Positions 325–335 (YEIDGSNKEPL) are enriched in basic and acidic residues. Positions 325 to 348 (YEIDGSNKEPLDEGEETLSLLDDE) are disordered. Over residues 336-348 (DEGEETLSLLDDE) the composition is skewed to acidic residues.

It belongs to the RecA family.

It is found in the cytoplasm. Functionally, can catalyze the hydrolysis of ATP in the presence of single-stranded DNA, the ATP-dependent uptake of single-stranded DNA by duplex DNA, and the ATP-dependent hybridization of homologous single-stranded DNAs. It interacts with LexA causing its activation and leading to its autocatalytic cleavage. This Listeria monocytogenes serotype 4b (strain CLIP80459) protein is Protein RecA.